Here is a 181-residue protein sequence, read N- to C-terminus: Probable RNA 2'-phosphotransferase (181 aa).

This sequence belongs to the KptA/TPT1 family.

Its function is as follows. Removes the 2'-phosphate from RNA via an intermediate in which the phosphate is ADP-ribosylated by NAD followed by a presumed transesterification to release the RNA and generate ADP-ribose 1''-2''-cyclic phosphate (APPR&gt;P). May function as an ADP-ribosylase. This chain is Probable RNA 2'-phosphotransferase, found in Nostoc punctiforme (strain ATCC 29133 / PCC 73102).